The following is a 142-amino-acid chain: Glia maturation factor beta (142 aa).

Serine 2 is subject to N-acetylserine. Residues 4-139 (SLVVCDVAED…TEEWLREKLG (136 aa)) enclose the ADF-H domain.

This sequence belongs to the actin-binding proteins ADF family. GMF subfamily. Post-translationally, phosphorylated; stimulated by phorbol ester.

This protein causes differentiation of brain cells, stimulation of neural regeneration, and inhibition of proliferation of tumor cells. The chain is Glia maturation factor beta (Gmfb) from Mus musculus (Mouse).